A 146-amino-acid polypeptide reads, in one-letter code: GFLTAEEKGLVNGLWGKVNVDEVGGEALGRLLVVYPWTQRFFQSFGDLSSADAIMHNSKVKAHGKKVLNSFSDGLKHVDDLKGTFAKLSELHCDKLHVDPENFKLLGNVLVCVLAHHFGKEFTPQVQAAYQKVVAGVASALAHRYH.

The 145-residue stretch at 2-146 folds into the Globin domain; it reads FLTAEEKGLV…VASALAHRYH (145 aa). S44 is modified (phosphoserine). An N6-acetyllysine modification is found at K59. H63 serves as a coordination point for heme b. K82 carries the post-translational modification N6-acetyllysine. H92 serves as a coordination point for heme b. Residue C93 is modified to S-nitrosocysteine.

Belongs to the globin family. As to quaternary structure, heterotetramer of two alpha chains and two beta chains. Red blood cells.

Involved in oxygen transport from the lung to the various peripheral tissues. This is Hemoglobin subunit beta (HBB) from Paguma larvata (Masked palm civet).